We begin with the raw amino-acid sequence, 511 residues long: Cytochrome P450 26B1 (511 aa).

Position 440 (cysteine 440) interacts with heme.

Belongs to the cytochrome P450 family. Heme is required as a cofactor.

Its subcellular location is the endoplasmic reticulum membrane. The protein resides in the microsome membrane. It catalyses the reaction all-trans-retinoate + reduced [NADPH--hemoprotein reductase] + O2 = all-trans-4-hydroxyretinoate + oxidized [NADPH--hemoprotein reductase] + H2O + H(+). It carries out the reaction all-trans-retinoate + reduced [NADPH--hemoprotein reductase] + O2 = all-trans-18-hydroxyretinoate + oxidized [NADPH--hemoprotein reductase] + H2O + H(+). In terms of biological role, a cytochrome P450 monooxygenase involved in the metabolism of retinoates (RAs), the active metabolites of vitamin A, and critical signaling molecules in animals. RAs exist as at least four different isomers: all-trans-RA (atRA), 9-cis-RA, 13-cis-RA, and 9,13-dicis-RA, where atRA is considered to be the biologically active isomer, although 9-cis-RA and 13-cis-RA also have activity. Catalyzes the hydroxylation of atRA primarily at C-4 and C-18, thereby contributing to the regulation of atRA homeostasis and signaling. Hydroxylation of atRA limits its biological activity and initiates a degradative process leading to its eventual elimination. Involved in the convertion of atRA to all-trans-4-oxo-RA. Can oxidize all-trans-13,14-dihydroretinoate (DRA) to metabolites which could include all-trans-4-oxo-DRA, all-trans-4-hydroxy-DRA, all-trans-5,8-epoxy-DRA, and all-trans-18-hydroxy-DRA. Plays a role in skeletal development, both at the level of patterning and in the ossification of bone and the establishment of some synovial joints. This chain is Cytochrome P450 26B1, found in Danio rerio (Zebrafish).